Here is a 582-residue protein sequence, read N- to C-terminus: PCNA-interacting partner (582 aa).

Composition is skewed to polar residues over residues 471 to 487 and 501 to 510; these read GVNS…SSGN and KSSSLTGNTS. Positions 471–514 are disordered; it reads GVNSSVGRPTIGTSSGNVHLGRSEKEKVARKSSSLTGNTSSKRK.

It belongs to the PARI family. As to quaternary structure, interacts with RAD51 and PCNA. Interacts with PARP1. Interacts with TASOR.

It is found in the cytoplasm. Its subcellular location is the nucleus. Functionally, required to suppress inappropriate homologous recombination, thereby playing a central role DNA repair and in the maintenance of genomic stability. Antagonizes homologous recombination by interfering with the formation of the RAD51-DNA homologous recombination structure. Binds single-strand DNA and poly(A) homopolymers. Positively regulate the poly(ADP-ribosyl)ation activity of PARP1; however such function may be indirect. The sequence is that of PCNA-interacting partner (PARPBP) from Bos taurus (Bovine).